Here is a 638-residue protein sequence, read N- to C-terminus: RNA exonuclease 3 (638 aa).

Positions 37-136 (AQDQVLEQKE…PPRRAPKEAL (100 aa)) are disordered. Residues 55-76 (LKLEPRPEAKETPKDDLRHVSD) are compositionally biased toward basic and acidic residues. Positions 77-111 (SGRSTPVKKTTAPATNAENISPVSRQPNIPKNTAT) are enriched in polar residues. The Exonuclease domain occupies 408–584 (ICFDCEMGYT…VEDALATGDL (177 aa)). The span at 612 to 622 (DSSSNTVSMQT) shows a compositional bias: polar residues. Residues 612 to 638 (DSSSNTVSMQTKLGEGAGAKRAREGTS) form a disordered region.

This sequence belongs to the REXO1/REXO3 family.

The protein localises to the cytoplasm. Its subcellular location is the nucleus. Its function is as follows. 3' to 5' exoribonuclease required for proper 3' end maturation of MRP RNA and of the U5L snRNA. The chain is RNA exonuclease 3 (rex3) from Emericella nidulans (strain FGSC A4 / ATCC 38163 / CBS 112.46 / NRRL 194 / M139) (Aspergillus nidulans).